Consider the following 469-residue polypeptide: 3-isopropylmalate dehydratase large subunit (469 aa).

[4Fe-4S] cluster is bound by residues C347, C410, and C413.

Belongs to the aconitase/IPM isomerase family. LeuC type 1 subfamily. Heterodimer of LeuC and LeuD. The cofactor is [4Fe-4S] cluster.

It catalyses the reaction (2R,3S)-3-isopropylmalate = (2S)-2-isopropylmalate. Its pathway is amino-acid biosynthesis; L-leucine biosynthesis; L-leucine from 3-methyl-2-oxobutanoate: step 2/4. In terms of biological role, catalyzes the isomerization between 2-isopropylmalate and 3-isopropylmalate, via the formation of 2-isopropylmaleate. The sequence is that of 3-isopropylmalate dehydratase large subunit from Burkholderia thailandensis (strain ATCC 700388 / DSM 13276 / CCUG 48851 / CIP 106301 / E264).